We begin with the raw amino-acid sequence, 86 residues long: MAHKKGVGSSRNGRDSNPKYLGVKIFGGQAIDAGNIIVRQRGTQFHPGAGVGLGRDHTLFALVNGKVEFTTKGPKKRRTVSVVAEA.

This sequence belongs to the bacterial ribosomal protein bL27 family.

In Xanthomonas campestris pv. campestris (strain 8004), this protein is Large ribosomal subunit protein bL27.